A 207-amino-acid chain; its full sequence is Protein I (207 aa).

The protein belongs to the coronavirus I protein family.

It is found in the virion. Structural protein that is not essential for the viral replication either in tissue culture or in its natural host. The protein is Protein I (N) of Sus scrofa (Pig).